Consider the following 362-residue polypeptide: Cyclic di-GMP phosphodiesterase PdeL (362 aa).

Positions 18–83 constitute an HTH luxR-type domain; that stretch reads HLSLPGSVSE…TFWRDIFFQY (66 aa). The H-T-H motif DNA-binding region spans 42-61; the sequence is VTEISQYRNRSAKTISHQKK. The region spanning 106–360 is the EAL domain; sequence HIVTPEAISL…KFISEWVMKA (255 aa). Residue Q127 coordinates substrate. E141 contributes to the Mg(2+) binding site. Substrate contacts are provided by residues 144–145 and N200; that span reads VR. Mg(2+) is bound by residues N200, E232, and D262. Residues D262, K286, 319–322, and Y341 each bind substrate; that span reads EGVE.

As to quaternary structure, is in a fast thermodynamic monomer-homodimer equilibrium. Dimerization is required for PDE activity. Dimerization affinity is increased about 100-fold upon substrate binding. Mg(2+) is required as a cofactor. Requires Mn(2+) as cofactor.

It carries out the reaction 3',3'-c-di-GMP + H2O = 5'-phosphoguanylyl(3'-&gt;5')guanosine + H(+). With respect to regulation, strongly inhibited by Ca(2+). Its function is as follows. Acts both as an enzyme and as a c-di-GMP sensor to couple transcriptional activity to the c-di-GMP status of the cell. Phosphodiesterase (PDE) that catalyzes the hydrolysis of cyclic-di-GMP (c-di-GMP) to 5'-pGpG. Also acts as a transcription factor to control its own expression. The protein is Cyclic di-GMP phosphodiesterase PdeL of Escherichia coli (strain K12).